We begin with the raw amino-acid sequence, 268 residues long: Small ribosomal subunit protein uS3 (268 aa).

The region spanning 38–106 (IRKLLATGME…QVQLNILEVK (69 aa)) is the KH type-2 domain. Residues 218-268 (VAAPAGDRPRRERPSRPRRSGATGTTATSTEAGRAATATADAPATTEQKEG) are disordered. Low complexity predominate over residues 237–268 (SGATGTTATSTEAGRAATATADAPATTEQKEG).

Belongs to the universal ribosomal protein uS3 family. Part of the 30S ribosomal subunit. Forms a tight complex with proteins S10 and S14.

In terms of biological role, binds the lower part of the 30S subunit head. Binds mRNA in the 70S ribosome, positioning it for translation. In Rhodococcus jostii (strain RHA1), this protein is Small ribosomal subunit protein uS3.